The following is a 215-amino-acid chain: uncharacterized protein (215 aa).

S-adenosyl-L-methionine contacts are provided by G53, E74, and D97.

It belongs to the methyltransferase superfamily. YrrT family.

In terms of biological role, could be a S-adenosyl-L-methionine-dependent methyltransferase. This is an uncharacterized protein from Geobacillus thermodenitrificans (strain NG80-2).